We begin with the raw amino-acid sequence, 488 residues long: UDP-N-acetylmuramate--L-alanine ligase (488 aa).

127–133 lines the ATP pocket; that stretch reads GTHGKTT.

It belongs to the MurCDEF family.

It is found in the cytoplasm. It carries out the reaction UDP-N-acetyl-alpha-D-muramate + L-alanine + ATP = UDP-N-acetyl-alpha-D-muramoyl-L-alanine + ADP + phosphate + H(+). It functions in the pathway cell wall biogenesis; peptidoglycan biosynthesis. Functionally, cell wall formation. This is UDP-N-acetylmuramate--L-alanine ligase from Shewanella putrefaciens (strain CN-32 / ATCC BAA-453).